The sequence spans 223 residues: 2-C-methyl-D-erythritol 4-phosphate cytidylyltransferase (223 aa).

It belongs to the IspD/TarI cytidylyltransferase family. IspD subfamily.

The enzyme catalyses 2-C-methyl-D-erythritol 4-phosphate + CTP + H(+) = 4-CDP-2-C-methyl-D-erythritol + diphosphate. It functions in the pathway isoprenoid biosynthesis; isopentenyl diphosphate biosynthesis via DXP pathway; isopentenyl diphosphate from 1-deoxy-D-xylulose 5-phosphate: step 2/6. Catalyzes the formation of 4-diphosphocytidyl-2-C-methyl-D-erythritol from CTP and 2-C-methyl-D-erythritol 4-phosphate (MEP). This chain is 2-C-methyl-D-erythritol 4-phosphate cytidylyltransferase, found in Prochlorococcus marinus subsp. pastoris (strain CCMP1986 / NIES-2087 / MED4).